Reading from the N-terminus, the 352-residue chain is MAEKKKIGILGASGYTGAELVRLLLRHPRVEIVLLTADRRAGHKMGDVFPQFAPYDLPQLVSIDSVDWAAAKLDLVFCALPHATTQTVLKDLLSKAPETKVVDLSADFRLQDPAVYAKWYGHEHHALDLQQEAVYGLTEIYRRDVKKARLVANPGCYTTCAQLPLIPLLKAKAIESDEIVIDAKSGMTGAGRSAKEEMLFSEVSEGFHAYGVGHHRHMSELDQEFSKAAGKDVLVTFTPHLTPMNRGIYSTIYVRGRRGKTARDLHETLSKQYEKDPFVYVLPFGKTPNSRHVRGSNMTFIGVAEDRKPGRAIIVSTLDNLTKGASGQAVQNMNVMLGFAETLGLDQPALSS.

Residue Cys-156 is part of the active site.

This sequence belongs to the NAGSA dehydrogenase family. Type 1 subfamily.

The protein localises to the cytoplasm. The catalysed reaction is N-acetyl-L-glutamate 5-semialdehyde + phosphate + NADP(+) = N-acetyl-L-glutamyl 5-phosphate + NADPH + H(+). It participates in amino-acid biosynthesis; L-arginine biosynthesis; N(2)-acetyl-L-ornithine from L-glutamate: step 3/4. In terms of biological role, catalyzes the NADPH-dependent reduction of N-acetyl-5-glutamyl phosphate to yield N-acetyl-L-glutamate 5-semialdehyde. The chain is N-acetyl-gamma-glutamyl-phosphate reductase from Afipia carboxidovorans (strain ATCC 49405 / DSM 1227 / KCTC 32145 / OM5) (Oligotropha carboxidovorans).